The primary structure comprises 283 residues: Bifunctional protein FolD (283 aa).

Residues 165–167 (GRS) and Ser-190 each bind NADP(+).

It belongs to the tetrahydrofolate dehydrogenase/cyclohydrolase family. Homodimer.

The catalysed reaction is (6R)-5,10-methylene-5,6,7,8-tetrahydrofolate + NADP(+) = (6R)-5,10-methenyltetrahydrofolate + NADPH. It catalyses the reaction (6R)-5,10-methenyltetrahydrofolate + H2O = (6R)-10-formyltetrahydrofolate + H(+). It functions in the pathway one-carbon metabolism; tetrahydrofolate interconversion. Its function is as follows. Catalyzes the oxidation of 5,10-methylenetetrahydrofolate to 5,10-methenyltetrahydrofolate and then the hydrolysis of 5,10-methenyltetrahydrofolate to 10-formyltetrahydrofolate. The sequence is that of Bifunctional protein FolD from Variovorax paradoxus (strain S110).